The sequence spans 309 residues: 4-hydroxy-3-methylbut-2-enyl diphosphate reductase (309 aa).

Cysteine 12 serves as a coordination point for [4Fe-4S] cluster. (2E)-4-hydroxy-3-methylbut-2-enyl diphosphate-binding residues include histidine 41 and histidine 74. Residues histidine 41 and histidine 74 each coordinate dimethylallyl diphosphate. Isopentenyl diphosphate-binding residues include histidine 41 and histidine 74. Position 96 (cysteine 96) interacts with [4Fe-4S] cluster. A (2E)-4-hydroxy-3-methylbut-2-enyl diphosphate-binding site is contributed by histidine 124. Histidine 124 serves as a coordination point for dimethylallyl diphosphate. Histidine 124 is an isopentenyl diphosphate binding site. Glutamate 126 serves as the catalytic Proton donor. (2E)-4-hydroxy-3-methylbut-2-enyl diphosphate is bound at residue threonine 167. Residue cysteine 197 participates in [4Fe-4S] cluster binding. Positions 225, 226, 227, and 269 each coordinate (2E)-4-hydroxy-3-methylbut-2-enyl diphosphate. Dimethylallyl diphosphate is bound by residues serine 225, serine 226, asparagine 227, and serine 269. Isopentenyl diphosphate contacts are provided by serine 225, serine 226, asparagine 227, and serine 269.

The protein belongs to the IspH family. [4Fe-4S] cluster is required as a cofactor.

It carries out the reaction isopentenyl diphosphate + 2 oxidized [2Fe-2S]-[ferredoxin] + H2O = (2E)-4-hydroxy-3-methylbut-2-enyl diphosphate + 2 reduced [2Fe-2S]-[ferredoxin] + 2 H(+). The catalysed reaction is dimethylallyl diphosphate + 2 oxidized [2Fe-2S]-[ferredoxin] + H2O = (2E)-4-hydroxy-3-methylbut-2-enyl diphosphate + 2 reduced [2Fe-2S]-[ferredoxin] + 2 H(+). It participates in isoprenoid biosynthesis; dimethylallyl diphosphate biosynthesis; dimethylallyl diphosphate from (2E)-4-hydroxy-3-methylbutenyl diphosphate: step 1/1. The protein operates within isoprenoid biosynthesis; isopentenyl diphosphate biosynthesis via DXP pathway; isopentenyl diphosphate from 1-deoxy-D-xylulose 5-phosphate: step 6/6. Its function is as follows. Catalyzes the conversion of 1-hydroxy-2-methyl-2-(E)-butenyl 4-diphosphate (HMBPP) into a mixture of isopentenyl diphosphate (IPP) and dimethylallyl diphosphate (DMAPP). Acts in the terminal step of the DOXP/MEP pathway for isoprenoid precursor biosynthesis. The polypeptide is 4-hydroxy-3-methylbut-2-enyl diphosphate reductase (Pseudoalteromonas translucida (strain TAC 125)).